The primary structure comprises 283 residues: NADPH-dependent 7-cyano-7-deazaguanine reductase (283 aa).

A substrate-binding site is contributed by 89 to 91 (IES). 91 to 92 (SK) is an NADPH binding site. Cys-190 acts as the Thioimide intermediate in catalysis. The active-site Proton donor is Asp-197. A substrate-binding site is contributed by 229 to 230 (HE). 258 to 259 (RG) is a binding site for NADPH.

It belongs to the GTP cyclohydrolase I family. QueF type 2 subfamily. As to quaternary structure, homodimer.

It localises to the cytoplasm. It carries out the reaction 7-aminomethyl-7-carbaguanine + 2 NADP(+) = 7-cyano-7-deazaguanine + 2 NADPH + 3 H(+). Its pathway is tRNA modification; tRNA-queuosine biosynthesis. Functionally, catalyzes the NADPH-dependent reduction of 7-cyano-7-deazaguanine (preQ0) to 7-aminomethyl-7-deazaguanine (preQ1). In Aromatoleum aromaticum (strain DSM 19018 / LMG 30748 / EbN1) (Azoarcus sp. (strain EbN1)), this protein is NADPH-dependent 7-cyano-7-deazaguanine reductase.